Here is a 401-residue protein sequence, read N- to C-terminus: Argininosuccinate synthase (401 aa).

ATP-binding positions include 8 to 16 and Ala35; that span reads AYSGGLDTS. Positions 86 and 91 each coordinate L-citrulline. Gly116 is a binding site for ATP. L-aspartate is bound by residues Thr118, Asn122, and Asp123. Asn122 is an L-citrulline binding site. Residues Arg126, Ser175, Ser184, Glu260, and Tyr272 each coordinate L-citrulline.

The protein belongs to the argininosuccinate synthase family. Type 1 subfamily. As to quaternary structure, homotetramer.

It is found in the cytoplasm. It catalyses the reaction L-citrulline + L-aspartate + ATP = 2-(N(omega)-L-arginino)succinate + AMP + diphosphate + H(+). Its pathway is amino-acid biosynthesis; L-arginine biosynthesis; L-arginine from L-ornithine and carbamoyl phosphate: step 2/3. This chain is Argininosuccinate synthase, found in Carboxydothermus hydrogenoformans (strain ATCC BAA-161 / DSM 6008 / Z-2901).